The primary structure comprises 346 residues: Uroporphyrinogen decarboxylase (346 aa).

Substrate-binding positions include 26–30 (RQAGR), phenylalanine 45, aspartate 76, tyrosine 153, serine 208, and histidine 323.

Belongs to the uroporphyrinogen decarboxylase family. Homodimer.

The protein localises to the cytoplasm. The enzyme catalyses uroporphyrinogen III + 4 H(+) = coproporphyrinogen III + 4 CO2. It participates in porphyrin-containing compound metabolism; protoporphyrin-IX biosynthesis; coproporphyrinogen-III from 5-aminolevulinate: step 4/4. In terms of biological role, catalyzes the decarboxylation of four acetate groups of uroporphyrinogen-III to yield coproporphyrinogen-III. The polypeptide is Uroporphyrinogen decarboxylase (Prochlorococcus marinus subsp. pastoris (strain CCMP1986 / NIES-2087 / MED4)).